The chain runs to 182 residues: dTTP/UTP pyrophosphatase (182 aa).

The active-site Proton acceptor is D64.

It belongs to the Maf family. YhdE subfamily. It depends on a divalent metal cation as a cofactor.

The protein resides in the cytoplasm. It catalyses the reaction dTTP + H2O = dTMP + diphosphate + H(+). The catalysed reaction is UTP + H2O = UMP + diphosphate + H(+). Functionally, nucleoside triphosphate pyrophosphatase that hydrolyzes dTTP and UTP. May have a dual role in cell division arrest and in preventing the incorporation of modified nucleotides into cellular nucleic acids. In Thermosipho melanesiensis (strain DSM 12029 / CIP 104789 / BI429), this protein is dTTP/UTP pyrophosphatase.